We begin with the raw amino-acid sequence, 143 residues long: Large ribosomal subunit protein uL11 (143 aa).

It belongs to the universal ribosomal protein uL11 family. Part of the ribosomal stalk of the 50S ribosomal subunit. Interacts with L10 and the large rRNA to form the base of the stalk. L10 forms an elongated spine to which L12 dimers bind in a sequential fashion forming a multimeric L10(L12)X complex. In terms of processing, one or more lysine residues are methylated.

Forms part of the ribosomal stalk which helps the ribosome interact with GTP-bound translation factors. This Chromobacterium violaceum (strain ATCC 12472 / DSM 30191 / JCM 1249 / CCUG 213 / NBRC 12614 / NCIMB 9131 / NCTC 9757 / MK) protein is Large ribosomal subunit protein uL11.